A 514-amino-acid polypeptide reads, in one-letter code: LWamide neuropeptides (514 aa).

The N-terminal stretch at 1-22 is a signal peptide; that stretch reads MALKCHLVLLAITLLLAQCSGS. Positions 23-53 are enriched in basic and acidic residues; it reads VDKKDSTTNHLDEKKTDSTEAHIVQETDALK. A propeptide spanning residues 23-75 is cleaved from the precursor; it reads VDKKDSTTNHLDEKKTDSTEAHIVQETDALKENSYLGAEEESKEEDKKRSAAP. Residues 23-180 form a disordered region; it reads VDKKDSTTNH…PGLWGRSADA (158 aa). Tryptophan amide is present on residues Trp81 and Trp90. Residues 93–97 constitute a propeptide that is removed on maturation; the sequence is SADAG. Tryptophan amide occurs at positions 102 and 111. Positions 114–118 are excised as a propeptide; sequence SADAG. A tryptophan amide mark is found at Trp123 and Trp132. Residues 135-139 constitute a propeptide that is removed on maturation; sequence SADAG. Tryptophan amide is present on residues Trp144 and Trp153. Residues 156 to 160 constitute a propeptide that is removed on maturation; the sequence is SADAG. Residues Trp165 and Trp174 each carry the tryptophan amide modification. Residues 177 to 181 constitute a propeptide that is removed on maturation; the sequence is SADAR. Trp186 carries the tryptophan amide modification. A propeptide spanning residues 190–199 is cleaved from the precursor; sequence EIYALWGGKR. Residue Trp205 is modified to Tryptophan amide. A propeptide spanning residues 208-212 is cleaved from the precursor; that stretch reads SADPG. The residue at position 217 (Trp217) is a Tryptophan amide. A propeptide spanning residues 221 to 230 is cleaved from the precursor; that stretch reads ELVGLWGGKR. The residue at position 236 (Trp236) is a Tryptophan amide. Residues 239–243 constitute a propeptide that is removed on maturation; that stretch reads SAEAG. 2 positions are modified to tryptophan amide: Trp248 and Trp257. Residues 258-475 are disordered; it reads GRSADPLQPG…GRSAGSGQLG (218 aa). Residues 260–264 constitute a propeptide that is removed on maturation; that stretch reads SADPL. Residues Trp269 and Trp278 each carry the tryptophan amide modification. Residues 281–284 constitute a propeptide that is removed on maturation; that stretch reads SADP. Residues Trp290 and Trp299 each carry the tryptophan amide modification. A propeptide spanning residues 302 to 305 is cleaved from the precursor; sequence SADP. Residues Trp311 and Trp320 each carry the tryptophan amide modification. The propeptide occupies 323 to 326; it reads SADP. Tryptophan amide occurs at positions 332 and 341. Residues 344–347 constitute a propeptide that is removed on maturation; it reads SADP. Trp353 bears the Tryptophan amide mark. The propeptide occupies 356–366; the sequence is SPGLWGRSADP. Tryptophan amide is present on Trp372. The propeptide occupies 376-387; it reads QNPGFWGRSADP. 2 positions are modified to tryptophan amide: Trp393 and Trp402. A propeptide spanning residues 405 to 408 is cleaved from the precursor; sequence SADP. 2 positions are modified to tryptophan amide: Trp414 and Trp423. A propeptide spanning residues 426 to 429 is cleaved from the precursor; that stretch reads SADP. Residues Trp435 and Trp444 each carry the tryptophan amide modification. A propeptide spanning residues 447 to 450 is cleaved from the precursor; it reads SADP. Tryptophan amide occurs at positions 456 and 465. A propeptide spanning residues 468–472 is cleaved from the precursor; that stretch reads SAGSG. Tryptophan amide occurs at positions 477 and 487. Residues 489-514 are disordered; that stretch reads RSAEPPQFEDLEDLKKKSAIPQPKGQ. The propeptide occupies 490 to 514; it reads SAEPPQFEDLEDLKKKSAIPQPKGQ.

It belongs to the LWamide neuropeptide family.

It is found in the secreted. Functionally, metamorphosin A may be part of an internal signaling system involved in control of metamorphosis. This Anthopleura elegantissima (Green aggregating anemone) protein is LWamide neuropeptides.